We begin with the raw amino-acid sequence, 73 residues long: Large ribosomal subunit protein bL31 (73 aa).

Zn(2+) contacts are provided by cysteine 16, cysteine 18, cysteine 38, and cysteine 41.

The protein belongs to the bacterial ribosomal protein bL31 family. Type A subfamily. As to quaternary structure, part of the 50S ribosomal subunit. Requires Zn(2+) as cofactor.

Binds the 23S rRNA. The chain is Large ribosomal subunit protein bL31 from Streptomyces avermitilis (strain ATCC 31267 / DSM 46492 / JCM 5070 / NBRC 14893 / NCIMB 12804 / NRRL 8165 / MA-4680).